The primary structure comprises 425 residues: Serine hydroxymethyltransferase (425 aa).

132 to 134 contributes to the (6S)-5,6,7,8-tetrahydrofolate binding site; sequence GHL. The residue at position 237 (Lys237) is an N6-(pyridoxal phosphate)lysine.

This sequence belongs to the SHMT family. Homodimer. Requires pyridoxal 5'-phosphate as cofactor.

The protein localises to the cytoplasm. It catalyses the reaction (6R)-5,10-methylene-5,6,7,8-tetrahydrofolate + glycine + H2O = (6S)-5,6,7,8-tetrahydrofolate + L-serine. It participates in one-carbon metabolism; tetrahydrofolate interconversion. It functions in the pathway amino-acid biosynthesis; glycine biosynthesis; glycine from L-serine: step 1/1. In terms of biological role, catalyzes the reversible interconversion of serine and glycine with tetrahydrofolate (THF) serving as the one-carbon carrier. This reaction serves as the major source of one-carbon groups required for the biosynthesis of purines, thymidylate, methionine, and other important biomolecules. Also exhibits THF-independent aldolase activity toward beta-hydroxyamino acids, producing glycine and aldehydes, via a retro-aldol mechanism. This is Serine hydroxymethyltransferase from Wolbachia sp. subsp. Brugia malayi (strain TRS).